The following is a 296-amino-acid chain: Ribosomal RNA small subunit methyltransferase H (296 aa).

S-adenosyl-L-methionine contacts are provided by residues 30–32 (GGH), Asp-49, Phe-76, Asp-97, and Gln-104.

Belongs to the methyltransferase superfamily. RsmH family.

The protein resides in the cytoplasm. The catalysed reaction is cytidine(1402) in 16S rRNA + S-adenosyl-L-methionine = N(4)-methylcytidine(1402) in 16S rRNA + S-adenosyl-L-homocysteine + H(+). Functionally, specifically methylates the N4 position of cytidine in position 1402 (C1402) of 16S rRNA. The chain is Ribosomal RNA small subunit methyltransferase H from Mesomycoplasma hyopneumoniae (strain 7448) (Mycoplasma hyopneumoniae).